Consider the following 221-residue polypeptide: ATP phosphoribosyltransferase (221 aa).

Belongs to the ATP phosphoribosyltransferase family. Short subfamily. Heteromultimer composed of HisG and HisZ subunits.

It is found in the cytoplasm. The catalysed reaction is 1-(5-phospho-beta-D-ribosyl)-ATP + diphosphate = 5-phospho-alpha-D-ribose 1-diphosphate + ATP. The protein operates within amino-acid biosynthesis; L-histidine biosynthesis; L-histidine from 5-phospho-alpha-D-ribose 1-diphosphate: step 1/9. Catalyzes the condensation of ATP and 5-phosphoribose 1-diphosphate to form N'-(5'-phosphoribosyl)-ATP (PR-ATP). Has a crucial role in the pathway because the rate of histidine biosynthesis seems to be controlled primarily by regulation of HisG enzymatic activity. In Anaeromyxobacter dehalogenans (strain 2CP-C), this protein is ATP phosphoribosyltransferase.